An 87-amino-acid polypeptide reads, in one-letter code: uncharacterized protein (87 aa).

A helical membrane pass occupies residues 25 to 47 (FFWEVCNMILFIIIALCGYLLFS).

It is found in the membrane. This is an uncharacterized protein from Bacillus subtilis (strain 168).